The chain runs to 210 residues: Glutathione S-transferase P (210 aa).

The region spanning 2–81 (PPYTIVYFPV…HLGRTLGLYG (80 aa)) is the GST N-terminal domain. Phosphotyrosine; by EGFR is present on Y4. Residues Y8, R14, W39, K45, and 52 to 53 (QL) each bind glutathione. T62 carries the post-translational modification Phosphothreonine. 65-66 (QS) serves as a coordination point for glutathione. A GST C-terminal domain is found at 83 to 204 (DQQEAALVDM…ASPEHMNRPI (122 aa)). An N6-succinyllysine mark is found at K103 and K116. The residue at position 128 (K128) is an N6-acetyllysine.

This sequence belongs to the GST superfamily. Pi family. Homodimer. Interacts with CDK5.

The protein resides in the cytoplasm. It localises to the mitochondrion. Its subcellular location is the nucleus. It catalyses the reaction RX + glutathione = an S-substituted glutathione + a halide anion + H(+). It carries out the reaction prostaglandin J2 + glutathione = prostaglandin J2-S-(R)-glutathione. The catalysed reaction is prostaglandin J2 + glutathione = prostaglandin J2-S-(S)-glutathione. The enzyme catalyses prostaglandin A2 + glutathione = prostaglandin A2-S-(S)-glutathione. It catalyses the reaction 11(S)-hydroxy-14(S),15(S)-epoxy-(5Z,8Z,12E)-eicosatrienoate + glutathione = (11S,15S)-dihydroxy-14(R)-S-glutathionyl-(5Z,8Z,12E)-eicosatrienoate. Functionally, conjugation of reduced glutathione to a wide number of exogenous and endogenous hydrophobic electrophiles. Involved in the formation of glutathione conjugates of both prostaglandin A2 (PGA2) and prostaglandin J2 (PGJ2). Participates in the formation of novel hepoxilin regioisomers. Negatively regulates CDK5 activity via p25/p35 translocation to prevent neurodegeneration. The polypeptide is Glutathione S-transferase P (GSTP1) (Bos taurus (Bovine)).